Reading from the N-terminus, the 110-residue chain is UPF0122 protein BcerKBAB4_3669 (110 aa).

Belongs to the UPF0122 family.

Functionally, might take part in the signal recognition particle (SRP) pathway. This is inferred from the conservation of its genetic proximity to ftsY/ffh. May be a regulatory protein. The protein is UPF0122 protein BcerKBAB4_3669 of Bacillus mycoides (strain KBAB4) (Bacillus weihenstephanensis).